The primary structure comprises 489 residues: Probable transporter MCH1 (489 aa).

12 helical membrane passes run 34 to 54 (ISLI…FTPV), 68 to 88 (IIGS…GYLA), 94 to 114 (VLLS…AATV), 124 to 144 (LAIS…TALL), 156 to 175 (LTIS…GSRV), 196 to 216 (FSFL…VVSI), 262 to 282 (ISTY…EMYI), 302 to 324 (VAIH…DFLV), 335 to 355 (LLSI…STFV), 359 to 379 (YYII…LYPT), 403 to 423 (IGST…CGVF), and 463 to 483 (SLII…ILRI).

It belongs to the major facilitator superfamily.

The protein resides in the vacuole membrane. Probable transporter. The sequence is that of Probable transporter MCH1 (MCH1) from Wickerhamomyces anomalus (Yeast).